A 281-amino-acid chain; its full sequence is Protein ZAR1-like 1.L (281 aa).

The segment at 183–267 (QKYGFFHCKN…QELCGRCKGQ (85 aa)) adopts a 3CxxC-type zinc-finger fold.

It belongs to the ZAR1 family. As to quaternary structure, component of a cytoplasmic ribonucleoprotein complex together with eif4enif1/4E-T and cpeb1. Expressed in oocytes.

The protein resides in the cytoplasm. It is found in the cytoplasmic ribonucleoprotein granule. MRNA-binding protein required for maternal mRNA storage, translation and degradation during oocyte maturation. Controls timing of meiosis during oogenesis. Probably promotes formation of some phase-separated membraneless compartment that stores maternal mRNAs in oocytes: acts by undergoing liquid-liquid phase separation upon binding to maternal mRNAs. Binds to the 3'-UTR of maternal mRNAs, inhibiting their translation. The chain is Protein ZAR1-like 1.L from Xenopus laevis (African clawed frog).